The chain runs to 263 residues: MEYLKRLALLISVIILTIFIMGCDSQSDTAENPKEGSKEAQIKKSFSKTLDMYPIKNLEDFYDKEGYRDGEFKKDDKGTWLIRSEIVKQPKGKVMKTRGMQLYINRNTETAKGFFVLKEISENNNRVNKDKEEKYEVKMVGNKIIPTEQINDEKIKKEIENFKFFVQYGNFKNFEKYNNGEFSYNPEAPIYSAKYQLHNDDYNVRQLRKRYDISTKETPKLLLKGGGDLKNSSVGQNDIEFTFVERKGENIYFNDSVEFIPSK.

The signal sequence occupies residues Met-1–Gly-22. Cys-23 carries N-palmitoyl cysteine lipidation. Residue Cys-23 is the site of S-diacylglycerol cysteine attachment.

The protein belongs to the staphylococcal tandem lipoprotein family.

The protein localises to the cell membrane. This is an uncharacterized protein from Staphylococcus aureus (strain COL).